The following is a 509-amino-acid chain: Steroid 17-alpha-hydroxylase/17,20 lyase (509 aa).

Cys440 is a binding site for heme.

It belongs to the cytochrome P450 family. Heme is required as a cofactor.

The protein resides in the endoplasmic reticulum membrane. The protein localises to the microsome membrane. The enzyme catalyses a C21-steroid + reduced [NADPH--hemoprotein reductase] + O2 = a 17alpha-hydroxy-C21-steroid + oxidized [NADPH--hemoprotein reductase] + H2O + H(+). It carries out the reaction progesterone + reduced [NADPH--hemoprotein reductase] + O2 = 17alpha-hydroxyprogesterone + oxidized [NADPH--hemoprotein reductase] + H2O + H(+). It catalyses the reaction pregnenolone + reduced [NADPH--hemoprotein reductase] + O2 = 17alpha-hydroxypregnenolone + oxidized [NADPH--hemoprotein reductase] + H2O + H(+). The catalysed reaction is 17alpha-hydroxyprogesterone + reduced [NADPH--hemoprotein reductase] + O2 = androst-4-ene-3,17-dione + acetate + oxidized [NADPH--hemoprotein reductase] + H2O + 2 H(+). The enzyme catalyses 17alpha-hydroxyprogesterone + reduced [NADPH--hemoprotein reductase] + O2 = 16alpha,17alpha-dihydroxyprogesterone + oxidized [NADPH--hemoprotein reductase] + H2O + H(+). It carries out the reaction 16alpha,17alpha-dihydroxyprogesterone + reduced [NADPH--hemoprotein reductase] + O2 = 6beta,16alpha,17alpha-trihydroxyprogesterone + oxidized [NADPH--hemoprotein reductase] + H2O + H(+). It catalyses the reaction 17alpha-hydroxypregnenolone + reduced [NADPH--hemoprotein reductase] + O2 = 3beta-hydroxyandrost-5-en-17-one + acetate + oxidized [NADPH--hemoprotein reductase] + H2O + 2 H(+). The catalysed reaction is 16alpha,17alpha-dihydroxypregnenolone + reduced [NADPH--hemoprotein reductase] + O2 = 3beta,16alpha-dihydroxy-androst-5-en-17-one + acetate + oxidized [NADPH--hemoprotein reductase] + H2O + 2 H(+). The enzyme catalyses 3beta-hydroxyandrost-5-en-17-one + reduced [NADPH--hemoprotein reductase] + O2 = 3beta,16alpha-dihydroxy-androst-5-en-17-one + oxidized [NADPH--hemoprotein reductase] + H2O + H(+). It carries out the reaction androst-4-ene-3,17-dione + reduced [NADPH--hemoprotein reductase] + O2 = 16alpha-hydroxyandrost-4-ene-3,17-dione + oxidized [NADPH--hemoprotein reductase] + H2O + H(+). It functions in the pathway steroid hormone biosynthesis. Its pathway is steroid biosynthesis; glucocorticoid biosynthesis. Regulated predominantly by intracellular cAMP levels. The 17,20-lyase activity is stimulated by cytochrome b5, which acts as an allosteric effector increasing the Vmax of the lyase activity. Its function is as follows. A cytochrome P450 monooxygenase involved in corticoid and androgen biosynthesis. Catalyzes 17-alpha hydroxylation of C21 steroids, which is common for both pathways. A second oxidative step, required only for androgen synthesis, involves an acyl-carbon cleavage. The 17-alpha hydroxy intermediates, as part of adrenal glucocorticoids biosynthesis pathway, are precursors of cortisol. Hydroxylates steroid hormones, pregnenolone and progesterone to form 17-alpha hydroxy metabolites, followed by the cleavage of the C17-C20 bond to form C19 steroids, dehydroepiandrosterone (DHEA) and androstenedione. Has 16-alpha hydroxylase activity. Catalyzes 16-alpha hydroxylation of 17-alpha hydroxy pregnenolone, followed by the cleavage of the C17-C20 bond to form 16-alpha-hydroxy DHEA. Also 16-alpha hydroxylates androgens, relevant for estriol synthesis. Mechanistically, uses molecular oxygen inserting one oxygen atom into a substrate, and reducing the second into a water molecule, with two electrons provided by NADPH via cytochrome P450 reductase (CPR; NADPH-ferrihemoprotein reductase). This Peromyscus leucopus (White-footed mouse) protein is Steroid 17-alpha-hydroxylase/17,20 lyase (Cyp17a1).